A 1179-amino-acid polypeptide reads, in one-letter code: DNA-directed RNA polymerase subunit beta (1179 aa).

This sequence belongs to the RNA polymerase beta chain family. As to quaternary structure, the RNAP catalytic core consists of 2 alpha, 1 beta, 1 beta' and 1 omega subunit. When a sigma factor is associated with the core the holoenzyme is formed, which can initiate transcription.

It carries out the reaction RNA(n) + a ribonucleoside 5'-triphosphate = RNA(n+1) + diphosphate. Functionally, DNA-dependent RNA polymerase catalyzes the transcription of DNA into RNA using the four ribonucleoside triphosphates as substrates. This Oceanobacillus iheyensis (strain DSM 14371 / CIP 107618 / JCM 11309 / KCTC 3954 / HTE831) protein is DNA-directed RNA polymerase subunit beta.